The sequence spans 1040 residues: Multidrug resistance protein MdtB (1040 aa).

The next 12 helical transmembrane spans lie at 25–45 (LLMA…PVAA), 347–367 (LMLA…NIPA), 369–389 (IIPG…MVFL), 396–416 (LTLM…IVVI), 440–460 (IGFT…PLLF), 472–492 (FAVT…TLTP), 537–557 (WLTL…WIVI), 863–883 (LGST…VLGV), 888–908 (FIHP…ALLA), 910–930 (IIAG…LIGI), 968–988 (ILMT…STGV), and 998–1018 (IAMV…TPVI).

It belongs to the resistance-nodulation-cell division (RND) (TC 2.A.6) family. MdtB subfamily. In terms of assembly, part of a tripartite efflux system composed of MdtA, MdtB and MdtC. MdtB forms a heteromultimer with MdtC.

It localises to the cell inner membrane. The sequence is that of Multidrug resistance protein MdtB from Salmonella dublin (strain CT_02021853).